Consider the following 247-residue polypeptide: Uridylate kinase (247 aa).

18 to 21 (KLSG) contributes to the ATP binding site. Glycine 60 contributes to the UMP binding site. Residues glycine 61 and arginine 65 each coordinate ATP. UMP-binding positions include aspartate 80 and 141–148 (TGNPFFTT). ATP is bound by residues threonine 168, tyrosine 174, and aspartate 177.

The protein belongs to the UMP kinase family. In terms of assembly, homohexamer.

The protein resides in the cytoplasm. It catalyses the reaction UMP + ATP = UDP + ADP. It participates in pyrimidine metabolism; CTP biosynthesis via de novo pathway; UDP from UMP (UMPK route): step 1/1. With respect to regulation, inhibited by UTP. In terms of biological role, catalyzes the reversible phosphorylation of UMP to UDP. This is Uridylate kinase from Pseudomonas savastanoi pv. phaseolicola (strain 1448A / Race 6) (Pseudomonas syringae pv. phaseolicola (strain 1448A / Race 6)).